An 87-amino-acid polypeptide reads, in one-letter code: Exendin-4 (87 aa).

Positions 1 to 23 are cleaved as a signal peptide; it reads MKIILWLCVFGLFLATLFPISWQ. Residues 24–45 constitute a propeptide that is removed on maturation; the sequence is MPVESGLSSEDSASSESFASKI. The residue at position 86 (Ser86) is a Serine amide.

This sequence belongs to the glucagon family. As to expression, expressed by the venom gland.

It localises to the secreted. In terms of biological role, venom protein that mimics the incretin hormone glucagon-like peptide 1 (GLP-1). It stimulates insulin synthesis and secretion, protects against beta-cell apoptosis in response to different insults, and promotes beta-cell proliferation It also promotes satiety, reduces food intake, reduces fat deposition, reduces body weight and inhibits gastric emptying. Interacts with GLP-1 receptor (GLP1R). Induces hypotension that is mediated by relaxation of cardiac smooth muscle. The polypeptide is Exendin-4 (Heloderma suspectum cinctum (Banded Gila monster)).